The sequence spans 508 residues: MGLPWYRVHTVVLNDPGRLIAVHLMHTALVSGWAGSMALYELAVFDPSDPVLDPMWRQGMFVIPFMTRLGVTQSWGGWSITGETVTNAGLWSYEGVAAVHIVLSGLLFLAAIWHWVYWDLELFRDERTGKPSLDLPKIFGIHLFLSGVLCFGFGAFHVTGLFGPGVWVSDPYGLTGRVQPVAPAWGAEGFDPFNPGGIASHHIAAGILGILAGLFHLSVRPPQRLYKGLRMGNVETVLSSSIAAVFFAAFVVAGTMWYGCAATPVELFGPTRYQWDQGYFQQEIDRRIRNSVAENVSLSEAWSKIPEKLAFYDYIGNNPAKGGLFRAGAMDNGDGIAVGWLGHAVFKDKEGNELFVRRMPTFFETFPVVLVDEEGIVRADVPFRRAESKYSIEQVGVSVEFYGGELNGVSFSDPATVKKYARRAQLGEIFEFDRATLKSDGVFRSSPRGWFTFGHACFALLFFFGHLWHGSRTLFRDVFAGIDPDLDSQVEFGLFQKLGDPTTRKQTV.

The next 6 helical transmembrane spans lie at Ala-21 to Ser-36, Ile-101 to Trp-115, Gly-140 to Phe-156, Ile-203 to Ser-218, Val-237 to Val-252, and Cys-457 to Arg-472.

It belongs to the PsbB/PsbC family. PsbB subfamily. As to quaternary structure, PSII is composed of 1 copy each of membrane proteins PsbA, PsbB, PsbC, PsbD, PsbE, PsbF, PsbH, PsbI, PsbJ, PsbK, PsbL, PsbM, PsbT, PsbX, PsbY, PsbZ, Psb30/Ycf12, at least 3 peripheral proteins of the oxygen-evolving complex and a large number of cofactors. It forms dimeric complexes. The cofactor is Binds multiple chlorophylls. PSII binds additional chlorophylls, carotenoids and specific lipids..

Its subcellular location is the plastid. The protein resides in the chloroplast thylakoid membrane. One of the components of the core complex of photosystem II (PSII). It binds chlorophyll and helps catalyze the primary light-induced photochemical processes of PSII. PSII is a light-driven water:plastoquinone oxidoreductase, using light energy to abstract electrons from H(2)O, generating O(2) and a proton gradient subsequently used for ATP formation. The protein is Photosystem II CP47 reaction center protein of Zygnema circumcarinatum (Green alga).